Reading from the N-terminus, the 384-residue chain is Queuine tRNA-ribosyltransferase (384 aa).

Residue D92 is the Proton acceptor of the active site. Residues 92 to 96 (DSGGF), D146, Q190, and G217 contribute to the substrate site. The interval 248–254 (GVGRPED) is RNA binding. D267 serves as the catalytic Nucleophile. The RNA binding; important for wobble base 34 recognition stretch occupies residues 272 to 276 (TRHAR). 4 residues coordinate Zn(2+): C305, C307, C310, and H337.

Belongs to the queuine tRNA-ribosyltransferase family. As to quaternary structure, homodimer. Within each dimer, one monomer is responsible for RNA recognition and catalysis, while the other monomer binds to the replacement base PreQ1. Requires Zn(2+) as cofactor.

The enzyme catalyses 7-aminomethyl-7-carbaguanine + guanosine(34) in tRNA = 7-aminomethyl-7-carbaguanosine(34) in tRNA + guanine. It participates in tRNA modification; tRNA-queuosine biosynthesis. Its function is as follows. Catalyzes the base-exchange of a guanine (G) residue with the queuine precursor 7-aminomethyl-7-deazaguanine (PreQ1) at position 34 (anticodon wobble position) in tRNAs with GU(N) anticodons (tRNA-Asp, -Asn, -His and -Tyr). Catalysis occurs through a double-displacement mechanism. The nucleophile active site attacks the C1' of nucleotide 34 to detach the guanine base from the RNA, forming a covalent enzyme-RNA intermediate. The proton acceptor active site deprotonates the incoming PreQ1, allowing a nucleophilic attack on the C1' of the ribose to form the product. After dissociation, two additional enzymatic reactions on the tRNA convert PreQ1 to queuine (Q), resulting in the hypermodified nucleoside queuosine (7-(((4,5-cis-dihydroxy-2-cyclopenten-1-yl)amino)methyl)-7-deazaguanosine). This is Queuine tRNA-ribosyltransferase from Xylella fastidiosa (strain 9a5c).